We begin with the raw amino-acid sequence, 298 residues long: MATGKEIRGKIKNFESTKKITKAMEMISVSKMRKAQERMRAARPYADKVRNIAANLGQANPEYIHAFMKTNEAPVVGMIVVTTDKGLCGGLNTNVLRSVTNKLRDLQSAGMSAQTVAIGNKGFGFLNRIGAKVVSHVTQLGDKPHLERLIGPVKVLLDAYARGEISAVYLSYTKFINTMKQEVVLEQLLPLSAARMQAETEASETASGAKHGWDYIYEPDAQSVIDDLLVRYVEALVYQSVAENMASEHAARMVAMKAATDNAGNVIGELKLVYNKTRQAAITKELSEIVSGAAAIGA.

It belongs to the ATPase gamma chain family. In terms of assembly, F-type ATPases have 2 components, CF(1) - the catalytic core - and CF(0) - the membrane proton channel. CF(1) has five subunits: alpha(3), beta(3), gamma(1), delta(1), epsilon(1). CF(0) has three main subunits: a, b and c.

The protein localises to the cell inner membrane. Functionally, produces ATP from ADP in the presence of a proton gradient across the membrane. The gamma chain is believed to be important in regulating ATPase activity and the flow of protons through the CF(0) complex. The polypeptide is ATP synthase gamma chain (Albidiferax ferrireducens (strain ATCC BAA-621 / DSM 15236 / T118) (Rhodoferax ferrireducens)).